The primary structure comprises 629 residues: MNNNNNNKKLNKENLNEIENWNEIELTDYKKQGLDEGTSSNIYLFESNGNVVNGSIEDSPKQQQQQQQQQQQQQQQQQQQQQQQQNIISSDEEIEDKPFQDRDSNIGDGSDIDSSGDSIDIENTDYSILVPFEDEENNNGSKSKFSIKKLKSFLGPALFISVGYMDPGNWATDLEGGSRFGYQLMWVLLFSNIMALFLQTLVIKLALVTKNDLAQQCRKEYSKTVNIFLWLILELAIISTDLAEVIGTAIGLNILFGLPLIAGVAITSLDTLLFLAIQRWGIRKLELLILLLLSMITMCFVIELFLSKPIASEVFSGFVPRLNSDSVMVATGIVGATTMPHNLFLHGSVVKSRKIPNDRRKSVIKQAYRYNVIDTVLALNCAFFVNIAILMLAASVFWKSNIQVTELSEAYRLLTKLMDGKLAAVLFGLGLFLAGQSSTITGTMAGQIVMEGFIKLRIKPWLRRFITRLLAIIPAAIVIIVLGDKGTYTLLIISQVLLSIGLPFAVVPLIIFTSSYEIMGEFKNRLSIIIINSIIALFIIGLNLATIFQLINDFLHNDSIISKCLTIIFLIPLSIALCCLLLWLIISKINFFTNLLSKIFNNNNNNNNKNIINNNNNYSGNTINNQTIQ.

The Cytoplasmic portion of the chain corresponds to 1 to 151 (MNNNNNNKKL…KSKFSIKKLK (151 aa)). Residues 50-119 (NVVNGSIEDS…SDIDSSGDSI (70 aa)) are disordered. Low complexity predominate over residues 62–85 (QQQQQQQQQQQQQQQQQQQQQQQQ). Residues 96 to 105 (DKPFQDRDSN) show a composition bias toward basic and acidic residues. Low complexity predominate over residues 106–118 (IGDGSDIDSSGDS). The helical transmembrane segment at 152-172 (SFLGPALFISVGYMDPGNWAT) threads the bilayer. Residues 173–182 (DLEGGSRFGY) lie on the Extracellular side of the membrane. The chain crosses the membrane as a helical span at residues 183 to 203 (QLMWVLLFSNIMALFLQTLVI). The Cytoplasmic portion of the chain corresponds to 204–224 (KLALVTKNDLAQQCRKEYSKT). Residues 225–245 (VNIFLWLILELAIISTDLAEV) form a helical membrane-spanning segment. Over 246–253 (IGTAIGLN) the chain is Extracellular. The chain crosses the membrane as a helical span at residues 254 to 274 (ILFGLPLIAGVAITSLDTLLF). The Cytoplasmic segment spans residues 275–286 (LAIQRWGIRKLE). Residues 287–307 (LLILLLLSMITMCFVIELFLS) traverse the membrane as a helical segment. At 308-326 (KPIASEVFSGFVPRLNSDS) the chain is on the extracellular side. Residues 327-347 (VMVATGIVGATTMPHNLFLHG) traverse the membrane as a helical segment. Residues 348–376 (SVVKSRKIPNDRRKSVIKQAYRYNVIDTV) are Cytoplasmic-facing. The helical transmembrane segment at 377–397 (LALNCAFFVNIAILMLAASVF) threads the bilayer. The Extracellular segment spans residues 398–421 (WKSNIQVTELSEAYRLLTKLMDGK). Residues 422-442 (LAAVLFGLGLFLAGQSSTITG) form a helical membrane-spanning segment. Residues 443-468 (TMAGQIVMEGFIKLRIKPWLRRFITR) lie on the Cytoplasmic side of the membrane. A helical transmembrane segment spans residues 469–489 (LLAIIPAAIVIIVLGDKGTYT). At 490-491 (LL) the chain is on the extracellular side. A helical membrane pass occupies residues 492-512 (IISQVLLSIGLPFAVVPLIIF). At 513 to 527 (TSSYEIMGEFKNRLS) the chain is on the cytoplasmic side. Residues 528–548 (IIIINSIIALFIIGLNLATIF) traverse the membrane as a helical segment. Topologically, residues 549-565 (QLINDFLHNDSIISKCL) are extracellular. The N-linked (GlcNAc...) asparagine glycan is linked to Asn557. The chain crosses the membrane as a helical span at residues 566–586 (TIIFLIPLSIALCCLLLWLII). At 587-629 (SKINFFTNLLSKIFNNNNNNNNKNIINNNNNYSGNTINNQTIQ) the chain is on the cytoplasmic side.

The protein belongs to the NRAMP family.

It is found in the cell membrane. Its function is as follows. Divalent transition metal (iron and manganese) transporter. The chain is Natural resistance-associated macrophage protein 2 homolog (nramp2) from Dictyostelium discoideum (Social amoeba).